Here is a 195-residue protein sequence, read N- to C-terminus: Transcriptional regulator GfcR (195 aa).

It belongs to the purine/pyrimidine phosphoribosyltransferase family. GfcR subfamily.

This Archaeoglobus fulgidus (strain ATCC 49558 / DSM 4304 / JCM 9628 / NBRC 100126 / VC-16) protein is Transcriptional regulator GfcR.